We begin with the raw amino-acid sequence, 129 residues long: Glycine cleavage system H protein (129 aa).

The Lipoyl-binding domain occupies 24–106 (SYTVGISEHA…FGDGWFFRVM (83 aa)). Lys-65 carries the post-translational modification N6-lipoyllysine.

It belongs to the GcvH family. The glycine cleavage system is composed of four proteins: P, T, L and H. Requires (R)-lipoate as cofactor.

The glycine cleavage system catalyzes the degradation of glycine. The H protein shuttles the methylamine group of glycine from the P protein to the T protein. In Shewanella woodyi (strain ATCC 51908 / MS32), this protein is Glycine cleavage system H protein.